Consider the following 111-residue polypeptide: Colipase (111 aa).

The signal sequence occupies residues 1-17 (MEKVLALVLLTLAVAYA). The propeptide at 18–22 (APDPR) is enterostatin, activation peptide. 5 disulfide bridges follow: Cys-34–Cys-45, Cys-40–Cys-56, Cys-44–Cys-78, Cys-66–Cys-86, and Cys-80–Cys-104.

This sequence belongs to the colipase family. Forms a 1:1 stoichiometric complex with pancreatic lipase. Expressed by the pancreas.

The protein localises to the secreted. In terms of biological role, colipase is a cofactor of pancreatic lipase. It allows the lipase to anchor itself to the lipid-water interface. Without colipase the enzyme is washed off by bile salts, which have an inhibitory effect on the lipase. Enterostatin has a biological activity as a satiety signal. The sequence is that of Colipase (CLPS) from Myocastor coypus (Coypu).